Reading from the N-terminus, the 292-residue chain is Pantothenate synthetase (292 aa).

30–37 provides a ligand contact to ATP; it reads MGFLHIGH. The Proton donor role is filled by H37. Q61 is a (R)-pantoate binding site. Q61 contributes to the beta-alanine binding site. 147–150 contributes to the ATP binding site; that stretch reads GEKD. Q153 contacts (R)-pantoate. ATP-binding positions include V176 and 184-187; that span reads CSSR.

Belongs to the pantothenate synthetase family. Homodimer.

The protein localises to the cytoplasm. It carries out the reaction (R)-pantoate + beta-alanine + ATP = (R)-pantothenate + AMP + diphosphate + H(+). The protein operates within cofactor biosynthesis; (R)-pantothenate biosynthesis; (R)-pantothenate from (R)-pantoate and beta-alanine: step 1/1. Catalyzes the condensation of pantoate with beta-alanine in an ATP-dependent reaction via a pantoyl-adenylate intermediate. The protein is Pantothenate synthetase of Agrobacterium fabrum (strain C58 / ATCC 33970) (Agrobacterium tumefaciens (strain C58)).